Reading from the N-terminus, the 441-residue chain is Baicalein 7-O-glucuronosyltransferase (441 aa).

It belongs to the UDP-glycosyltransferase family. As to quaternary structure, homodimer.

It catalyses the reaction baicalein + UDP-alpha-D-glucuronate = baicalin + UDP. Inhibited by copper, zinc and iron, p-Chloromercuri-benzoic acid (PCMBA) and 4,4'-diisothiocyanostilbene-2,2'-disulfonic acid (DIDS), but not by N-ethylmaleimide (NEM), dithioerythritol (DTE), calcium or magnesium. Its function is as follows. Involved in the production of glucuronosylated baicalein, a flavonoid that shows antiallergic, anti-HIV and antitumor activities. Can use baicalein, scutellarein and wogonin as substrates, but not chrysin, apigenin, luteolin, quercetin, formononetin and daidzein. Highly specific for UDP-glucuronate (UDP-GlcUA) and no activity with UDP-glucose or UDP-galacturonic acid. The chain is Baicalein 7-O-glucuronosyltransferase (UBGAT-I) from Scutellaria baicalensis (Baical skullcap).